A 421-amino-acid polypeptide reads, in one-letter code: UPF0415 protein C7orf25 homolog (421 aa).

Belongs to the UPF0415 family.

The sequence is that of UPF0415 protein C7orf25 homolog from Bos taurus (Bovine).